Consider the following 1007-residue polypeptide: uncharacterized protein (1007 aa).

The signal sequence occupies residues 1-51 (MTTPISNSPSSIPTVTVSTTTASSGSLGTSTVSSTTTSTSVAQTATTTSSA). The span at 1 to 96 (MTTPISNSPS…SATANKTSSA (96 aa)) shows a compositional bias: low complexity. Disordered stretches follow at residues 1 to 186 (MTTP…GNPI), 200 to 224 (TYTTSPRNENIFSPGPEGLPNMSLP), 387 to 533 (NWGS…GPDI), 543 to 562 (TVYPGENGGSTEGPLPANQN), 578 to 645 (ETII…GPDI), 655 to 674 (TVYPGENGGSTEGPLPANQN), and 712 to 757 (DLED…GPDI). Residues 118–163 (DGEVSSNYDDVDTPTNSSDSTVDSDYQDVETQYKTISNNGENTYET) are compositionally biased toward polar residues. Over residues 167-176 (HGEKNTHVQE) the composition is skewed to basic and acidic residues. Polar residues-rich tracts occupy residues 177–186 (SHASGTGNPI) and 200–210 (TYTTSPRNENI). Low complexity predominate over residues 423-442 (VINVNVNVGGTNVNIGDTNV). The span at 443–453 (SKGSGTPTSSQ) shows a compositional bias: polar residues. The segment covering 469-491 (IDTNNQTNGDINTNDNSNNVDGS) has biased composition (low complexity). Positions 507-523 (DTESTNGNDSGKTTSTE) are enriched in polar residues. Residues 597–618 (ADADVEDTSDTDSGIGDDDGVS) show a composition bias toward acidic residues. Residues 619 to 635 (DTESTNGNNSGKTTSTE) are compositionally biased toward low complexity. Residues 712–730 (DLEDVSDADSGFGDDDGIS) show a composition bias toward acidic residues. A compositionally biased stretch (polar residues) spans 732–743 (TESTNGNDSGKN).

It belongs to the chlamydial CPn_0572/CT_456/TC_0741 family.

This is an uncharacterized protein from Chlamydia muridarum (strain MoPn / Nigg).